The following is a 209-amino-acid chain: Small ribosomal subunit protein uS4 (209 aa).

One can recognise an S4 RNA-binding domain in the interval Ala99 to Ala160.

It belongs to the universal ribosomal protein uS4 family. As to quaternary structure, part of the 30S ribosomal subunit. Contacts protein S5. The interaction surface between S4 and S5 is involved in control of translational fidelity.

In terms of biological role, one of the primary rRNA binding proteins, it binds directly to 16S rRNA where it nucleates assembly of the body of the 30S subunit. With S5 and S12 plays an important role in translational accuracy. In Dechloromonas aromatica (strain RCB), this protein is Small ribosomal subunit protein uS4.